Consider the following 289-residue polypeptide: 33 kDa chaperonin (289 aa).

Intrachain disulfides connect C229–C231 and C262–C265.

Belongs to the HSP33 family. Under oxidizing conditions two disulfide bonds are formed involving the reactive cysteines. Under reducing conditions zinc is bound to the reactive cysteines and the protein is inactive.

Its subcellular location is the cytoplasm. In terms of biological role, redox regulated molecular chaperone. Protects both thermally unfolding and oxidatively damaged proteins from irreversible aggregation. Plays an important role in the bacterial defense system toward oxidative stress. This Pectobacterium carotovorum subsp. carotovorum (strain PC1) protein is 33 kDa chaperonin.